Consider the following 550-residue polypeptide: Zinc finger protein 426 (550 aa).

Residues 39–110 (VSFEDVIVDF…KIVFPEWKLQ (72 aa)) enclose the KRAB domain. 11 C2H2-type zinc fingers span residues 219–241 (FECS…QRTH), 274–296 (HRCK…MRTH), 302–324 (YECK…GRTH), 330–352 (YVCS…VRSH), 358–380 (YGCK…IRTH), 386–408 (FVCV…LKLH), 414–436 (CECK…MRTH), 442–464 (YTCK…MRIH), 470–492 (YECK…ERTH), 498–522 (YECK…SHTH), and 528–550 (YKCQ…ERIH).

The protein localises to the nucleus. In terms of biological role, may be involved in transcriptional regulation. This chain is Zinc finger protein 426 (Znf426), found in Mus musculus (Mouse).